The primary structure comprises 201 residues: Holliday junction branch migration complex subunit RuvA (201 aa).

The segment at 1–61 (MIEFVKGTID…EDAFSLYGFS (61 aa)) is domain I. A domain II region spans residues 62 to 140 (TREEKALFTK…DVVPEMIDNL (79 aa)). Positions 141 to 150 (FNHEARIEKQ) are flexible linker. A domain III region spans residues 151-201 (EAETALDEALEALRVLGYAEKEIKKVLPHLKEETALSTDQYVKKALQKLLK).

Belongs to the RuvA family. As to quaternary structure, homotetramer. Forms an RuvA(8)-RuvB(12)-Holliday junction (HJ) complex. HJ DNA is sandwiched between 2 RuvA tetramers; dsDNA enters through RuvA and exits via RuvB. An RuvB hexamer assembles on each DNA strand where it exits the tetramer. Each RuvB hexamer is contacted by two RuvA subunits (via domain III) on 2 adjacent RuvB subunits; this complex drives branch migration. In the full resolvosome a probable DNA-RuvA(4)-RuvB(12)-RuvC(2) complex forms which resolves the HJ.

The protein resides in the cytoplasm. Functionally, the RuvA-RuvB-RuvC complex processes Holliday junction (HJ) DNA during genetic recombination and DNA repair, while the RuvA-RuvB complex plays an important role in the rescue of blocked DNA replication forks via replication fork reversal (RFR). RuvA specifically binds to HJ cruciform DNA, conferring on it an open structure. The RuvB hexamer acts as an ATP-dependent pump, pulling dsDNA into and through the RuvAB complex. HJ branch migration allows RuvC to scan DNA until it finds its consensus sequence, where it cleaves and resolves the cruciform DNA. This is Holliday junction branch migration complex subunit RuvA from Bacillus velezensis (strain DSM 23117 / BGSC 10A6 / LMG 26770 / FZB42) (Bacillus amyloliquefaciens subsp. plantarum).